The following is a 169-amino-acid chain: Methanogen homoaconitase small subunit (169 aa).

A YLRT motif is present at residues Tyr27–Thr30.

Belongs to the LeuD family. LeuD type 2 subfamily. As to quaternary structure, heterotetramer of 2 HacA and 2 HacB proteins.

The enzyme catalyses (2R)-homocitrate = (2R,3S)-homoisocitrate. The catalysed reaction is (2R)-homocitrate = cis-homoaconitate + H2O. It catalyses the reaction (2R,3S)-homoisocitrate = cis-homoaconitate + H2O. It carries out the reaction cis-(homo)2aconitate + H2O = (2R,3S)-iso(homo)2citrate. The enzyme catalyses cis-(homo)3aconitate + H2O = (2R,3S)-iso(homo)3citrate. The protein operates within organic acid metabolism; 2-oxosuberate biosynthesis. Functionally, component of a hydro-lyase with broad substrate specificity for cis-unsaturated tricarboxylic acids. Catalyzes both the reversible dehydration of (R)-homocitrate ((R)-2-hydroxybutane-1,2,4-tricarboxylate) to produce cis-homoaconitate ((Z)-but-1-ene-1,2,4-tricarboxylate), and its hydration to homoisocitrate ((1R,2S)-1-hydroxybutane-1,2,4-tricarboxylate). Is also able to hydrate the analogous longer chain substrates cis-homo(2)-aconitate, cis-homo(3)-aconitate. These reactions are part of the biosynthesis pathway of coenzyme B. The sequence is that of Methanogen homoaconitase small subunit (hacB) from Methanosarcina mazei (strain ATCC BAA-159 / DSM 3647 / Goe1 / Go1 / JCM 11833 / OCM 88) (Methanosarcina frisia).